A 179-amino-acid polypeptide reads, in one-letter code: Probable F-box protein At3g25550 (179 aa).

In terms of domain architecture, F-box spans Ile-19–Asn-55.

The sequence is that of Probable F-box protein At3g25550 from Arabidopsis thaliana (Mouse-ear cress).